The chain runs to 669 residues: UvrABC system protein C (669 aa).

The 80-residue stretch at 16–95 (TNPGVYRFRD…IKEFKPRFNV (80 aa)) folds into the GIY-YIG domain. Residues 207–242 (KRFIGRLEKDMAAAVAELDYERAARVRDDIIALRKV) form the UVR domain.

Belongs to the UvrC family. As to quaternary structure, interacts with UvrB in an incision complex.

It is found in the cytoplasm. Its function is as follows. The UvrABC repair system catalyzes the recognition and processing of DNA lesions. UvrC both incises the 5' and 3' sides of the lesion. The N-terminal half is responsible for the 3' incision and the C-terminal half is responsible for the 5' incision. The chain is UvrABC system protein C from Arthrobacter sp. (strain FB24).